The sequence spans 152 residues: Nucleoside diphosphate kinase (152 aa).

Positions 12, 60, 88, 94, 105, and 115 each coordinate ATP. The active-site Pros-phosphohistidine intermediate is the His118.

The protein belongs to the NDK family. In terms of assembly, homotrimer. Mg(2+) is required as a cofactor.

The catalysed reaction is a 2'-deoxyribonucleoside 5'-diphosphate + ATP = a 2'-deoxyribonucleoside 5'-triphosphate + ADP. The enzyme catalyses a ribonucleoside 5'-diphosphate + ATP = a ribonucleoside 5'-triphosphate + ADP. Its function is as follows. Major role in the synthesis of nucleoside triphosphates other than ATP. The ATP gamma phosphate is transferred to the NDP beta phosphate via a ping-pong mechanism, using a phosphorylated active-site intermediate. The protein is Nucleoside diphosphate kinase (ndk-1) of Neurospora crassa (strain ATCC 24698 / 74-OR23-1A / CBS 708.71 / DSM 1257 / FGSC 987).